The chain runs to 320 residues: Malate dehydrogenase (320 aa).

NAD(+) is bound by residues 10-15 (GAGQIG) and aspartate 34. 2 residues coordinate substrate: arginine 83 and arginine 89. Residues asparagine 96 and 119 to 121 (ITN) each bind NAD(+). 2 residues coordinate substrate: asparagine 121 and arginine 152. Histidine 176 acts as the Proton acceptor in catalysis.

The protein belongs to the LDH/MDH superfamily. MDH type 3 family.

The catalysed reaction is (S)-malate + NAD(+) = oxaloacetate + NADH + H(+). Its function is as follows. Catalyzes the reversible oxidation of malate to oxaloacetate. This Cereibacter sphaeroides (strain ATCC 17025 / ATH 2.4.3) (Rhodobacter sphaeroides) protein is Malate dehydrogenase.